The primary structure comprises 180 residues: Large ribosomal subunit protein uL5 (180 aa).

This sequence belongs to the universal ribosomal protein uL5 family. As to quaternary structure, part of the 50S ribosomal subunit; part of the 5S rRNA/L5/L18/L25 subcomplex. Contacts the 5S rRNA and the P site tRNA. Forms a bridge to the 30S subunit in the 70S ribosome.

This is one of the proteins that bind and probably mediate the attachment of the 5S RNA into the large ribosomal subunit, where it forms part of the central protuberance. In the 70S ribosome it contacts protein S13 of the 30S subunit (bridge B1b), connecting the 2 subunits; this bridge is implicated in subunit movement. Contacts the P site tRNA; the 5S rRNA and some of its associated proteins might help stabilize positioning of ribosome-bound tRNAs. This is Large ribosomal subunit protein uL5 from Leuconostoc mesenteroides subsp. mesenteroides (strain ATCC 8293 / DSM 20343 / BCRC 11652 / CCM 1803 / JCM 6124 / NCDO 523 / NBRC 100496 / NCIMB 8023 / NCTC 12954 / NRRL B-1118 / 37Y).